Reading from the N-terminus, the 126-residue chain is Large ribosomal subunit protein bL12 (126 aa).

Belongs to the bacterial ribosomal protein bL12 family. Homodimer. Part of the ribosomal stalk of the 50S ribosomal subunit. Forms a multimeric L10(L12)X complex, where L10 forms an elongated spine to which 2 to 4 L12 dimers bind in a sequential fashion. Binds GTP-bound translation factors.

Its function is as follows. Forms part of the ribosomal stalk which helps the ribosome interact with GTP-bound translation factors. Is thus essential for accurate translation. The chain is Large ribosomal subunit protein bL12 from Methylobacterium nodulans (strain LMG 21967 / CNCM I-2342 / ORS 2060).